A 309-amino-acid chain; its full sequence is Cell division protein FtsQ (309 aa).

The Cytoplasmic portion of the chain corresponds to 1–52 (MLALRGRRGKRVRYPADGVAEADEAFVLPRPLRRGVRFLISLGAGRIRFPNH). The helical transmembrane segment at 53–74 (TGTVAAAAFMVATGLYGMSLGG) threads the bilayer. The Periplasmic segment spans residues 75–309 (HTQSFAQVST…KMLKAQEKRI (235 aa)). A POTRA domain is found at 89 to 157 (FAIEDVRVSG…GTIEVVLKER (69 aa)).

It belongs to the FtsQ/DivIB family. FtsQ subfamily.

The protein resides in the cell inner membrane. In terms of biological role, essential cell division protein. The chain is Cell division protein FtsQ from Rhizobium meliloti (strain 1021) (Ensifer meliloti).